The following is an 80-amino-acid chain: MEARVLWLLALVLALGSSSLADQYVGLSENLCAVPAKNRVDCGYPEISPEQCVNRGCCFDSSIPEVPWCFKPLQDTECTF.

The N-terminal stretch at 1 to 21 (MEARVLWLLALVLALGSSSLA) is a signal peptide. The 44-residue stretch at 30–73 (NLCAVPAKNRVDCGYPEISPEQCVNRGCCFDSSIPEVPWCFKPL) folds into the P-type domain. Disulfide bonds link cysteine 32/cysteine 58, cysteine 42/cysteine 57, and cysteine 52/cysteine 69.

In terms of assembly, monomer. Homodimer; disulfide-linked.

Its subcellular location is the secreted. The protein localises to the extracellular space. The protein resides in the extracellular matrix. It is found in the cytoplasm. Its function is as follows. Involved in the maintenance and repair of the intestinal mucosa. Promotes the mobility of epithelial cells in healing processes (motogen). The sequence is that of Trefoil factor 3 (TFF3) from Felis catus (Cat).